A 270-amino-acid polypeptide reads, in one-letter code: Phosphatidate cytidylyltransferase (270 aa).

The next 8 membrane-spanning stretches (helical) occupy residues Phe17 to Ile37, Phe55 to Pro75, Ile81 to Phe101, Val104 to Ile124, Gly129 to Phe149, Glu170 to Val190, Leu193 to Ile213, and Ile248 to Val268.

The protein belongs to the CDS family.

Its subcellular location is the cell membrane. The enzyme catalyses a 1,2-diacyl-sn-glycero-3-phosphate + CTP + H(+) = a CDP-1,2-diacyl-sn-glycerol + diphosphate. The protein operates within phospholipid metabolism; CDP-diacylglycerol biosynthesis; CDP-diacylglycerol from sn-glycerol 3-phosphate: step 3/3. This is Phosphatidate cytidylyltransferase (cdsA) from Thermotoga maritima (strain ATCC 43589 / DSM 3109 / JCM 10099 / NBRC 100826 / MSB8).